Reading from the N-terminus, the 64-residue chain is Conotoxin Mr3.5 (64 aa).

The N-terminal stretch at 1 to 19 is a signal peptide; that stretch reads MSKLGVLLTICLLLFPLTA. Positions 20–46 are excised as a propeptide; sequence LPLDGDQPADQRAERTQAEKHSLPDPR. Intrachain disulfides connect Cys-49–Cys-58, Cys-50–Cys-62, and Cys-54–Cys-63. Residue Cys-63 is modified to Cysteine amide.

Belongs to the conotoxin M superfamily. As to expression, expressed by the venom duct.

Its subcellular location is the secreted. The chain is Conotoxin Mr3.5 from Conus marmoreus (Marble cone).